Reading from the N-terminus, the 471-residue chain is Putative multidrug resistance protein MdtD (471 aa).

Residues 1–11 (MTDLPDSTRWQ) lie on the Periplasmic side of the membrane. Residues 12 to 32 (LWIVAFGFFMQSLDTTIVNTA) form a helical membrane-spanning segment. The Cytoplasmic portion of the chain corresponds to 33-48 (LPSMAQSLGESPLHMH). The chain crosses the membrane as a helical span at residues 49–69 (MVIVSYVLTVAVMLPASGWLA). The Periplasmic segment spans residues 70 to 76 (DKVGVRN). A helical transmembrane segment spans residues 77–97 (IFFTAIVLFTLGSLFCALSGT). Residues 98–101 (LNEL) are Cytoplasmic-facing. The helical transmembrane segment at 102–124 (LLARALQGVGGAMMVPVGRLTVM) threads the bilayer. Residues 125-137 (KIVPREQYMAAMT) are Periplasmic-facing. The helical transmembrane segment at 138–158 (FVTLPGQVGPLLGPALGGLLV) threads the bilayer. Topologically, residues 159-164 (EYASWH) are cytoplasmic. The chain crosses the membrane as a helical span at residues 165-185 (WIFLINIPVGIIGAIATLMLM). The Periplasmic portion of the chain corresponds to 186–196 (PNYTMQTRRFD). Residues 197–217 (LSGFLLLAVGMAVLTLALDGS) traverse the membrane as a helical segment. The Cytoplasmic portion of the chain corresponds to 218–224 (KGTGLSP). A helical transmembrane segment spans residues 225–245 (LAIAGLVAVGVVALVLYLLHA). Topologically, residues 246 to 262 (RNNNRALFSLKLFRTRT) are periplasmic. Residues 263–283 (FSLGLAGSFAGRIGSGMLPFM) traverse the membrane as a helical segment. The Cytoplasmic segment spans residues 284-285 (TP). The helical transmembrane segment at 286 to 306 (VFLQIGLGFSPFHAGLMMIPM) threads the bilayer. Over 307 to 341 (VLGSMGMKRIVVQVVNRFGYRRVLVATTLGLSLVT) the chain is Periplasmic. The chain crosses the membrane as a helical span at residues 342 to 362 (MLFMTTALLGWYYVLPFVLFL). Residues 363–395 (QGMVNSTRFSSMNTLTLKDLPDNLASSGNSLLS) are Cytoplasmic-facing. A helical transmembrane segment spans residues 396–416 (MIMQLSMSIGVTIAGLLLGLF). Topologically, residues 417–430 (GSQHVSVDSGTTQT) are periplasmic. The helical transmembrane segment at 431–451 (VFMYTWLSMAFIIALPAFIFA) threads the bilayer. Topologically, residues 452 to 471 (RVPNDTHQNVAISRRKRSAQ) are cytoplasmic.

The protein belongs to the major facilitator superfamily. TCR/Tet family.

The protein localises to the cell inner membrane. The polypeptide is Putative multidrug resistance protein MdtD (Escherichia coli O7:K1 (strain IAI39 / ExPEC)).